A 375-amino-acid chain; its full sequence is Probable butyrate kinase 2 (375 aa).

Belongs to the acetokinase family.

The protein localises to the cytoplasm. It carries out the reaction butanoate + ATP = butanoyl phosphate + ADP. The chain is Probable butyrate kinase 2 from Thermotoga maritima (strain ATCC 43589 / DSM 3109 / JCM 10099 / NBRC 100826 / MSB8).